We begin with the raw amino-acid sequence, 221 residues long: MADEVILLDFWPSMFGMRTRIALEEKNVKFDYREQDLWNKSPILLEMNPVHKKIPVLIHNGNPVCESLIQIEYIDEVWPSKTPLLPSDPYQRAQAKFWGDFIDKKVYASARLIWGAKGEEHEAGKKEFIEILKTLESELGDKTYFGGETFGYVDIALIGFYSWFEAYEKFGSFSIEAECPKLIAWGKRCVERESVAKSLPDSEKIIKFVPELRKKLGIEIE.

Position 2 is an N-acetylalanine (Ala2). Positions 3 to 82 (DEVILLDFWP…YIDEVWPSKT (80 aa)) constitute a GST N-terminal domain. Residues 13-14 (SM), 39-40 (NK), 53-54 (KI), and 66-67 (ES) contribute to the glutathione site. Positions 88–208 (DPYQRAQAKF…LPDSEKIIKF (121 aa)) constitute a GST C-terminal domain. Position 149 is a phosphothreonine (Thr149).

Belongs to the GST superfamily. Tau family.

The protein resides in the cytoplasm. The protein localises to the cytosol. It carries out the reaction RX + glutathione = an S-substituted glutathione + a halide anion + H(+). Its function is as follows. May be involved in the conjugation of reduced glutathione to a wide number of exogenous and endogenous hydrophobic electrophiles and have a detoxification role against certain herbicides. This Arabidopsis thaliana (Mouse-ear cress) protein is Glutathione S-transferase U25 (GSTU25).